The primary structure comprises 228 residues: MSVDIAVVDYGMGNLRSVSKAIEHVAPSATVVVTSSPDVIAEAGRVVFPGQGAARDCMREIDARGLREAIATAARSKPFLGICMGMQVLFEHSEEGDTACLGILPGNVQRFPHEAMHDDRGNKLKVPHMGWNNVHQGAPHPLWSGIEDGERFYFVHSYFVQPTTPDLIAGFSHYPFPFTCAVASGNIFAVQFHPEKSQNAGLTLLGNFVTWNPGEHASACDLSGASCA.

The Glutamine amidotransferase type-1 domain occupies 4 to 218; that stretch reads DIAVVDYGMG…VTWNPGEHAS (215 aa). Cysteine 83 acts as the Nucleophile in catalysis. Residues histidine 193 and glutamate 195 contribute to the active site.

As to quaternary structure, heterodimer of HisH and HisF.

It localises to the cytoplasm. The catalysed reaction is 5-[(5-phospho-1-deoxy-D-ribulos-1-ylimino)methylamino]-1-(5-phospho-beta-D-ribosyl)imidazole-4-carboxamide + L-glutamine = D-erythro-1-(imidazol-4-yl)glycerol 3-phosphate + 5-amino-1-(5-phospho-beta-D-ribosyl)imidazole-4-carboxamide + L-glutamate + H(+). The enzyme catalyses L-glutamine + H2O = L-glutamate + NH4(+). It participates in amino-acid biosynthesis; L-histidine biosynthesis; L-histidine from 5-phospho-alpha-D-ribose 1-diphosphate: step 5/9. IGPS catalyzes the conversion of PRFAR and glutamine to IGP, AICAR and glutamate. The HisH subunit catalyzes the hydrolysis of glutamine to glutamate and ammonia as part of the synthesis of IGP and AICAR. The resulting ammonia molecule is channeled to the active site of HisF. The chain is Imidazole glycerol phosphate synthase subunit HisH from Thiobacillus denitrificans (strain ATCC 25259 / T1).